Here is a 475-residue protein sequence, read N- to C-terminus: MAGKTLYDKLWDSHLVKQRDDGSALIYIDRHIIHEVTSPQAFEGLRLARRKPWRIDSIIATPDHNVPTTSERKGGIEAIEDQVSRLQVQTLDDNCDEYGITEFKMNDPRQGIVHVIGPEQGATLPGMSVVCGDSHTSTHGAFGALAHGIGTSEVEHVLATQCLVAKKMKNMLVSVEGQLPFGVTAKDIVLAVIGKIGTAGGNGYAIEFAGSAIRDLSIEGRMTICNMSIEAGARVGMVATDEKTIEYVKGRPFAPKGAEWDLAVEAWQDLVSDADAVFDTVVKLDAAQIKPQVSWGTSPEMVLAVDQNVPDPAQEPDLVKRGSIERALKYMGLKANQPITDIQLDRVFIGSCTNSRIEDLRAAADVAKGRKVAATIKQAIVVPGSGLIKAQAEKEGLDKVFIDAGFEWREPGCSMCLAMNPDRLGSGEHCASTSNRNFEGRQGAGGRTHLVSPAMAAAAAVTGRFIDVRELRNPA.

[4Fe-4S] cluster-binding residues include cysteine 352, cysteine 413, and cysteine 416.

Belongs to the aconitase/IPM isomerase family. LeuC type 1 subfamily. Heterodimer of LeuC and LeuD. It depends on [4Fe-4S] cluster as a cofactor.

The catalysed reaction is (2R,3S)-3-isopropylmalate = (2S)-2-isopropylmalate. Its pathway is amino-acid biosynthesis; L-leucine biosynthesis; L-leucine from 3-methyl-2-oxobutanoate: step 2/4. In terms of biological role, catalyzes the isomerization between 2-isopropylmalate and 3-isopropylmalate, via the formation of 2-isopropylmaleate. This is 3-isopropylmalate dehydratase large subunit from Pseudomonas syringae pv. tomato (strain ATCC BAA-871 / DC3000).